The following is a 1149-amino-acid chain: ATP-dependent helicase/deoxyribonuclease subunit B (1149 aa).

In terms of domain architecture, UvrD-like helicase ATP-binding spans 1 to 276 (MAIRYIFGRA…INLDIEERKV (276 aa)). Position 8–15 (8–15 (GRAGRGKS)) interacts with ATP. Positions 273 to 586 (ERKVLPKEKE…LVGSIERSKS (314 aa)) constitute a UvrD-like helicase C-terminal domain. [4Fe-4S] cluster contacts are provided by cysteine 786, cysteine 1105, cysteine 1108, and cysteine 1114.

Belongs to the helicase family. AddB/RexB type 1 subfamily. As to quaternary structure, heterodimer of AddA and AddB. The cofactor is Mg(2+). Requires [4Fe-4S] cluster as cofactor.

In terms of biological role, the heterodimer acts as both an ATP-dependent DNA helicase and an ATP-dependent, dual-direction single-stranded exonuclease. Recognizes the chi site generating a DNA molecule suitable for the initiation of homologous recombination. The AddB subunit has 5' -&gt; 3' nuclease activity but not helicase activity. The sequence is that of ATP-dependent helicase/deoxyribonuclease subunit B from Alkaliphilus metalliredigens (strain QYMF).